The following is a 300-amino-acid chain: Manganese-binding lipoprotein MntA (300 aa).

The N-terminal stretch at 1-19 (MKKVCFSFVIMVIALIAAG) is a signal peptide. Cys20 carries N-palmitoyl cysteine lipidation. Cys20 is lipidated: S-diacylglycerol cysteine. 4 residues coordinate Mn(2+): His68, His130, Glu196, and Asp271.

The protein belongs to the bacterial solute-binding protein 9 family.

The protein resides in the cell membrane. Probably part of ATP-binding cassette (ABC) transport system MntABCD involved in manganese import. Binds manganese and delivers it to the membrane permease for translocation into the cytoplasm. The sequence is that of Manganese-binding lipoprotein MntA (mntA) from Halalkalibacterium halodurans (strain ATCC BAA-125 / DSM 18197 / FERM 7344 / JCM 9153 / C-125) (Bacillus halodurans).